The sequence spans 917 residues: PAX3- and PAX7-binding protein 1 (917 aa).

Residues M1–R11 show a composition bias toward basic residues. Disordered regions lie at residues M1–K123, L143–S205, and R229–F275. S16 bears the Phosphoserine mark. Residues S16–E28 show a composition bias toward acidic residues. Gly residues-rich tracts occupy residues E40–A50 and A73–P85. K149 participates in a covalent cross-link: Glycyl lysine isopeptide (Lys-Gly) (interchain with G-Cter in SUMO1); alternate. K149 is covalently cross-linked (Glycyl lysine isopeptide (Lys-Gly) (interchain with G-Cter in SUMO2); alternate). A phosphoserine mark is found at S154, S155, and S158. Residues P161–N172 show a composition bias toward basic and acidic residues. The segment covering G183–K193 has biased composition (acidic residues). Phosphoserine is present on S191. The span at M234–E256 shows a compositional bias: basic and acidic residues. The span at D257–D268 shows a compositional bias: acidic residues. A phosphoserine mark is found at S262 and S295. 2 disordered regions span residues S362 to N381 and A530 to S564. The necessary and sufficient for interaction with PAX7 stretch occupies residues T378 to S558. The segment covering A542–E554 has biased composition (basic and acidic residues). Residues S557 and S558 each carry the phosphoserine modification. A Phosphothreonine modification is found at T563.

Belongs to the GCF family. In terms of assembly, interacts with PAX3 and PAX7. Interacts with WDR5; associates with a histone methyltransferase (HMT) complex composed at least of RBBP5, ASH2L, SET1, SET2 and KMT2A/MLL1, KMT2D/MLL2, KMT2C/MLL3 and KMT2B/MLL4 through direct interaction with WDR5. Ubiquitous.

The protein resides in the nucleus. Adapter protein linking the transcription factors PAX3 and PAX7 to the histone methylation machinery and involved in myogenesis. Associates with a histone methyltransferase complex that specifically mediates dimethylation and trimethylation of 'Lys-4' of histone H3. Mediates the recruitment of that complex to the transcription factors PAX3 and PAX7 on chromatin to regulate the expression of genes involved in muscle progenitor cells proliferation including ID3 and CDC20. This chain is PAX3- and PAX7-binding protein 1 (PAXBP1), found in Homo sapiens (Human).